The primary structure comprises 207 residues: Probable mediator of RNA polymerase II transcription subunit 19b (207 aa).

Positions 99–207 (DTAPVELPPA…SSKLDEMGAM (109 aa)) are disordered. The span at 127-152 (DRKHRKHKDKKEKDREHKKHKHKHKD) shows a compositional bias: basic residues. The segment covering 153–167 (RIKDKDKDKDRDKKK) has biased composition (basic and acidic residues). Positions 168-179 (EKSGHHDKKRKN) are enriched in basic residues.

This sequence belongs to the plant Mediator complex subunit 19 family. In terms of assembly, component of the Mediator complex.

It is found in the nucleus. In terms of biological role, component of the Mediator complex, a coactivator involved in the regulated transcription of nearly all RNA polymerase II-dependent genes. Mediator functions as a bridge to convey information from gene-specific regulatory proteins to the basal RNA polymerase II transcription machinery. The Mediator complex, having a compact conformation in its free form, is recruited to promoters by direct interactions with regulatory proteins and serves for the assembly of a functional preinitiation complex with RNA polymerase II and the general transcription factors. The chain is Probable mediator of RNA polymerase II transcription subunit 19b (MED19B) from Arabidopsis thaliana (Mouse-ear cress).